The sequence spans 360 residues: sn-glycerol-3-phosphate import ATP-binding protein UgpC (360 aa).

The ABC transporter domain maps to 4–235; the sequence is LSLKGVRKSY…PATTFVASFI (232 aa). 37 to 44 provides a ligand contact to ATP; that stretch reads GPSGCGKS.

It belongs to the ABC transporter superfamily. sn-glycerol-3-phosphate importer (TC 3.A.1.1.3) family. In terms of assembly, the complex is composed of two ATP-binding proteins (UgpC), two transmembrane proteins (UgpA and UgpE) and a solute-binding protein (UgpB).

The protein resides in the cell inner membrane. The catalysed reaction is sn-glycerol 3-phosphate(out) + ATP + H2O = sn-glycerol 3-phosphate(in) + ADP + phosphate + H(+). In terms of biological role, part of the ABC transporter complex UgpBAEC involved in sn-glycerol-3-phosphate (G3P) import. Responsible for energy coupling to the transport system. In Burkholderia pseudomallei (strain K96243), this protein is sn-glycerol-3-phosphate import ATP-binding protein UgpC.